An 833-amino-acid chain; its full sequence is Major vault protein (833 aa).

MVP repeat units follow at residues 10–52 (RYYY…VSVP), 54–115 (RHYC…RKLQ), 119–170 (PNTG…TVIY), 171–223 (PNTA…TMLS), 224–278 (ELKA…VSLN), 280–328 (KEYV…LVVG), 329–380 (KEEA…MALD), and 381–433 (RNEG…SIKT).

The vault ribonucleoprotein particle is a huge (400 A x 670 A) cage structure of 12.9 MDa. It consists of a dimer of half-vaults, with each half-vault comprising 39 identical major vault protein (MVP) chains, PARP4 and one or more vault RNAs (vRNAs).

It is found in the cytoplasm. The protein localises to the nucleus. Functionally, required for normal vault structure. Vaults are multi-subunit structures that may act as scaffolds for proteins involved in signal transduction. Vaults may also play a role in nucleo-cytoplasmic transport. The chain is Major vault protein from Leishmania braziliensis.